The sequence spans 267 residues: Hydrolase FUB4 (267 aa).

Catalysis depends on charge relay system residues serine 93, aspartate 183, and histidine 243.

The protein belongs to the AB hydrolase 3 family.

The protein operates within mycotoxin biosynthesis. Hydrolase; part of the gene cluster that mediates the biosynthesis of fusaric acid, a mycotoxin with low to moderate toxicity to animals and humans, but with high phytotoxic properties. L-aspartate is suggested as fusaric acid amino acid precursor that is activated and further processed to O-acetyl-L-homoserine by cluster enzymes aspartate kinase FUB3 and homoserine O-acetyltransferase FUB5, as well as enzymes of the primary metabolism. The polyketide synthase (PKS) FUB1 generates the triketide trans-2-hexenal which is presumptively released by the hydrolase FUB4 and linked to the NRPS-bound amino acid precursor by NAD(P)-dependent dehydrogenase FUB6. FUB1, FUB4, and the non-canonical NRPS Fub8 may form an enzyme complex. Further processing of the NRPS-bound intermediate might be carried out by FUB6 and the sulfhydrylase FUB7, enabling a spontaneous electrocyclization to close the carbon backbone of fusaric acid. Dihydrofusaric acid is likely to be released via reduction by the thioester reductase (TR) domain of FUB8 whereupon the final oxidation to fusaric acid may (also) be performed by the FMN-dependent dehydrogenase FUB9. The sequence is that of Hydrolase FUB4 from Gibberella moniliformis (strain M3125 / FGSC 7600) (Maize ear and stalk rot fungus).